The following is a 616-amino-acid chain: MKRDVRILLLGEAQVGKTSLIMALVGEEFPDEVPSRAEEITIPADVTPERIPTHIVDYSGVEQTEDELREEIAKANVVCVVYDVTDLETIEKIGSKWIPMVNGNAERNSRLPIILVGNKSDLQCGSSMESILPIMNQFSEIETCVECSAKNLKNISEVFYYAQKAVLHPTAPLYDPEEKQLRPQCKKALTRIFTISEQDNNQILSDEELNFFQQSCFGNPLAPQALEDVKMVVKKNTADGVRDNGLTLNGFLFLNTLFIQRGRHETTWTILRRFGYDDALELTDDYLYPPLRIPHESSTELNHFGYQFLQKAFEKHDLDEDGALSPSELQSFFSVFPYTPWGPELASTVCTAQGGYLPLHGYLCQWTLVAYLDVHRCLEHLGYLGYPILCEQESQTHAITVTREKSIDLEKGQTQRNVFLCRVIGPRGTGKSAFLRAFLGQSLEEQQQSNKPPSFYSVNTVLVGGQEKYLILFEVDVDTEFLKTSDAPCDVACLMYDVSDSKSFNYCASIYKQHYMESQTPCLFVGCKYDQGEVKQQHGISPAEFCHKHRLPPPYHFTCQGTPDRTIYSKLATAAAFPHLHDTELSTASFWLRVALGATVAAVVGFTLYKALLRSK.

Topologically, residues 1-590 (MKRDVRILLL…HDTELSTASF (590 aa)) are cytoplasmic. Residues 2 to 168 (KRDVRILLLG…FYYAQKAVLH (167 aa)) form the Miro 1 domain. GTP is bound by residues Gly16, Lys17, Thr18, and Ser19. Thr18 contributes to the Mg(2+) binding site. Asp57 contacts Mg(2+). 6 residues coordinate GTP: Ser59, Asn118, Lys119, Asp121, Ala149, and Lys150. 2 consecutive EF-hand domains span residues 184–219 (QCKKALTRIFTISEQDNNQILSDEELNFFQQSCFGN) and 304–339 (FGYQFLQKAFEKHDLDEDGALSPSELQSFFSVFPYT). Residues Asp199, Asn201, Glu208, Asp317, Asp319, Asp321, and Glu328 each coordinate Ca(2+). In terms of domain architecture, Miro 2 spans 416–577 (RNVFLCRVIG…YSKLATAAAF (162 aa)). Residues Gly428, Gly430, Lys431, Ser432, and Ala433 each coordinate GTP. Ser432 is a binding site for Mg(2+). Glu474 contributes to the Mg(2+) binding site. Residues Lys528, Asp530, and Cys559 each contribute to the GTP site. Residues 591-613 (WLRVALGATVAAVVGFTLYKALL) form a helical; Anchor for type IV membrane protein membrane-spanning segment. The Mitochondrial intermembrane portion of the chain corresponds to 614–616 (RSK).

Belongs to the mitochondrial Rho GTPase family. Homodimer.

The protein localises to the mitochondrion outer membrane. The catalysed reaction is GTP + H2O = GDP + phosphate + H(+). It catalyses the reaction ATP + H2O = ADP + phosphate + H(+). It carries out the reaction UTP + H2O = UDP + phosphate + H(+). Atypical mitochondrial nucleoside-triphosphatase (NTPase) involved in mitochondrial trafficking. Probably involved in control of anterograde transport of mitochondria and their subcellular distribution. Can hydrolyze GTP, ATP and UTP. The protein is Mitochondrial Rho GTPase 2 (rhot2) of Xenopus tropicalis (Western clawed frog).